The primary structure comprises 84 residues: Small ribosomal subunit protein uS17 (84 aa).

The protein belongs to the universal ribosomal protein uS17 family. Part of the 30S ribosomal subunit.

One of the primary rRNA binding proteins, it binds specifically to the 5'-end of 16S ribosomal RNA. This Photobacterium profundum (strain SS9) protein is Small ribosomal subunit protein uS17.